The following is a 170-amino-acid chain: Adenine phosphoribosyltransferase (170 aa).

The protein belongs to the purine/pyrimidine phosphoribosyltransferase family. Homodimer.

The protein resides in the cytoplasm. The enzyme catalyses AMP + diphosphate = 5-phospho-alpha-D-ribose 1-diphosphate + adenine. It participates in purine metabolism; AMP biosynthesis via salvage pathway; AMP from adenine: step 1/1. Its function is as follows. Catalyzes a salvage reaction resulting in the formation of AMP, that is energically less costly than de novo synthesis. This is Adenine phosphoribosyltransferase from Thermosynechococcus vestitus (strain NIES-2133 / IAM M-273 / BP-1).